A 26-amino-acid chain; its full sequence is Metallothionein (26 aa).

Low complexity predominate over residues 1–14 (MGDCGCSGASSCNC). The tract at residues 1–26 (MGDCGCSGASSCNCGSGCSCSNCGSK) is disordered. Positions 4, 6, 12, 14, 18, 20, and 23 each coordinate Cu(+). Positions 15–26 (GSGCSCSNCGSK) are enriched in cys residues.

It belongs to the metallothionein superfamily. Type 8 family.

This Neurospora crassa (strain ATCC 24698 / 74-OR23-1A / CBS 708.71 / DSM 1257 / FGSC 987) protein is Metallothionein (cmt).